A 529-amino-acid polypeptide reads, in one-letter code: Cytochrome P450 monooxygenase acuD (529 aa).

Residues 8-28 (FAVIAASAAAVAGVLFLIYAA) traverse the membrane as a helical segment. N81 is a glycosylation site (N-linked (GlcNAc...) asparagine). C449 contacts heme.

The protein belongs to the cytochrome P450 family. The cofactor is heme.

The protein resides in the endoplasmic reticulum membrane. The catalysed reaction is 3-hydroxybenzyl alcohol + reduced [NADPH--hemoprotein reductase] + O2 = gentisyl alcohol + oxidized [NADPH--hemoprotein reductase] + H2O + H(+). It functions in the pathway secondary metabolite biosynthesis. Its function is as follows. Cytochrome P450 monooxygenase; part of the gene cluster that mediates the biosynthesis of aculins. The pathway begins with the synthesis of 6-methylsalicylic acid by the polyketide synthase (PKS) acuA via condensation of acetate and malonate units. The 6-methylsalicylic acid decarboxylase acuB then catalyzes the decarboxylation of 6-methylsalicylic acid to yield m-cresol (also known as 3-methylphenol). These first reactions occur in the cytosol. The intermediate m-cresol is then transported into the endoplasmic reticulum where the cytochrome P450 monooxygenase acuC converts it to m-hydroxybenzyl alcohol, which is further converted to gentisyl alcohol by the cytochrome P450 monooxygenase acuD. Gentisyl alcohol is further oxidized by the oxidoreductase acuE that probably catalyzes hydroxylation of the aromatic ring. The aromatic system might then be opened by oxidation through a Baeyer-Villiger type of oxidation, which could be catalyzed by acuF, with the carboxylic acid at C-1 subsequently reduced to an aldehyde by acuG. Subsequently, a hemiacetal is formed, before the dehydrogenase acuH would reduce the double bond between C-4 and C-6. Finally, keto-enol tautomerism results in formation of aculinic acid, which exists as two diastereomers (both R/S configurations at C-1) by non-enzymatic hemiacetal formation. The carboxypeptidase acuI could be involved in the linking of aculinic acid to an aculene A moiety produced by the aculene biosynthesis cluster and which leads to the production of aculin A. AcuI may also be involved in the attachment of proline to aculinic acid to form epi-aculins A and B. This Aspergillus aculeatus (strain ATCC 16872 / CBS 172.66 / WB 5094) protein is Cytochrome P450 monooxygenase acuD.